Here is a 408-residue protein sequence, read N- to C-terminus: Putative glutamate--cysteine ligase 2 (408 aa).

The protein belongs to the glutamate--cysteine ligase type 2 family. YbdK subfamily.

It catalyses the reaction L-cysteine + L-glutamate + ATP = gamma-L-glutamyl-L-cysteine + ADP + phosphate + H(+). ATP-dependent carboxylate-amine ligase which exhibits weak glutamate--cysteine ligase activity. The chain is Putative glutamate--cysteine ligase 2 from Bradyrhizobium sp. (strain ORS 278).